The following is a 77-amino-acid chain: Large ribosomal subunit protein bL28 (77 aa).

This sequence belongs to the bacterial ribosomal protein bL28 family.

The chain is Large ribosomal subunit protein bL28 from Verminephrobacter eiseniae (strain EF01-2).